A 391-amino-acid chain; its full sequence is NADH-quinone oxidoreductase subunit D (391 aa).

The protein belongs to the complex I 49 kDa subunit family. As to quaternary structure, NDH-1 is composed of 14 different subunits. Subunits NuoB, C, D, E, F, and G constitute the peripheral sector of the complex.

The protein resides in the cell inner membrane. The catalysed reaction is a quinone + NADH + 5 H(+)(in) = a quinol + NAD(+) + 4 H(+)(out). In terms of biological role, NDH-1 shuttles electrons from NADH, via FMN and iron-sulfur (Fe-S) centers, to quinones in the respiratory chain. The immediate electron acceptor for the enzyme in this species is believed to be ubiquinone. Couples the redox reaction to proton translocation (for every two electrons transferred, four hydrogen ions are translocated across the cytoplasmic membrane), and thus conserves the redox energy in a proton gradient. In Rickettsia bellii (strain OSU 85-389), this protein is NADH-quinone oxidoreductase subunit D.